Here is a 223-residue protein sequence, read N- to C-terminus: Small ribosomal subunit protein uS5 (223 aa).

The span at 1 to 15 (MTEAVAAEATETAPA) shows a compositional bias: low complexity. The segment at 1–51 (MTEAVAAEATETAPATDDRRGGRRGERGDRGQGRGDRGGRGGRDGGREAEK) is disordered. Residues 16–51 (TDDRRGGRRGERGDRGQGRGDRGGRGGRDGGREAEK) show a composition bias toward basic and acidic residues. An S5 DRBM domain is found at 54-117 (FVERVVTINR…EEAKKSFFRV (64 aa)).

The protein belongs to the universal ribosomal protein uS5 family. Part of the 30S ribosomal subunit. Contacts proteins S4 and S8.

Functionally, with S4 and S12 plays an important role in translational accuracy. Its function is as follows. Located at the back of the 30S subunit body where it stabilizes the conformation of the head with respect to the body. In Paenarthrobacter aurescens (strain TC1), this protein is Small ribosomal subunit protein uS5.